The sequence spans 750 residues: Photosystem I P700 chlorophyll a apoprotein A1 (750 aa).

8 helical membrane-spanning segments follow: residues 70–93, 156–179, 195–219, 291–309, 346–369, 385–411, 433–455, and 531–549; these read VFSAHFGQLSIIFLWLSGMYFHGA, LYCTAIGALVFAGLMLFAGWFHYH, LNHHLAGLLGLGSLSWAGHQVHVSL, IAHHHLAIAILFLIAGHMY, WHAQLSLNLAMLGSLTIVVAHHMY, LSLFTHHMWIGGFLIVGAAAHAAIFMV, AIISHLNWACIFLGFHSFGLYIH, and FLVHHIHAFTIHVTVLILL. 2 residues coordinate [4Fe-4S] cluster: Cys573 and Cys582. The next 2 helical transmembrane spans lie at 589-610 and 664-686; these read HVFLGLFWMYNAISVVIFHFSW and LSAYGLFFLGAHFVWAFSLMFLF. Position 675 (His675) interacts with chlorophyll a'. Residues Met683 and Tyr691 each contribute to the chlorophyll a site. Trp692 contributes to the phylloquinone binding site. A helical membrane pass occupies residues 724-744; that stretch reads AVGVTHYLLGGIATTWAFFLA.

It belongs to the PsaA/PsaB family. As to quaternary structure, the PsaA/B heterodimer binds the P700 chlorophyll special pair and subsequent electron acceptors. PSI consists of a core antenna complex that captures photons, and an electron transfer chain that converts photonic excitation into a charge separation. The eukaryotic PSI reaction center is composed of at least 11 subunits. It depends on P700 is a chlorophyll a/chlorophyll a' dimer, A0 is one or more chlorophyll a, A1 is one or both phylloquinones and FX is a shared 4Fe-4S iron-sulfur center. as a cofactor.

The protein resides in the plastid. It is found in the chloroplast thylakoid membrane. The enzyme catalyses reduced [plastocyanin] + hnu + oxidized [2Fe-2S]-[ferredoxin] = oxidized [plastocyanin] + reduced [2Fe-2S]-[ferredoxin]. Its function is as follows. PsaA and PsaB bind P700, the primary electron donor of photosystem I (PSI), as well as the electron acceptors A0, A1 and FX. PSI is a plastocyanin-ferredoxin oxidoreductase, converting photonic excitation into a charge separation, which transfers an electron from the donor P700 chlorophyll pair to the spectroscopically characterized acceptors A0, A1, FX, FA and FB in turn. Oxidized P700 is reduced on the lumenal side of the thylakoid membrane by plastocyanin. The polypeptide is Photosystem I P700 chlorophyll a apoprotein A1 (Drimys granadensis).